The chain runs to 411 residues: Imidazolonepropionase (411 aa).

Fe(3+)-binding residues include H78 and H80. The Zn(2+) site is built by H78 and H80. 4-imidazolone-5-propanoate is bound by residues R87, Y150, and H183. Y150 lines the N-formimidoyl-L-glutamate pocket. H248 serves as a coordination point for Fe(3+). Residue H248 participates in Zn(2+) binding. Q251 lines the 4-imidazolone-5-propanoate pocket. A Fe(3+)-binding site is contributed by D322. Residue D322 coordinates Zn(2+). Residues N324 and G326 each coordinate N-formimidoyl-L-glutamate. S327 is a binding site for 4-imidazolone-5-propanoate.

It belongs to the metallo-dependent hydrolases superfamily. HutI family. Zn(2+) serves as cofactor. Requires Fe(3+) as cofactor.

It is found in the cytoplasm. The catalysed reaction is 4-imidazolone-5-propanoate + H2O = N-formimidoyl-L-glutamate. It functions in the pathway amino-acid degradation; L-histidine degradation into L-glutamate; N-formimidoyl-L-glutamate from L-histidine: step 3/3. Its function is as follows. Catalyzes the hydrolytic cleavage of the carbon-nitrogen bond in imidazolone-5-propanoate to yield N-formimidoyl-L-glutamate. It is the third step in the universal histidine degradation pathway. The protein is Imidazolonepropionase of Flavobacterium johnsoniae (strain ATCC 17061 / DSM 2064 / JCM 8514 / BCRC 14874 / CCUG 350202 / NBRC 14942 / NCIMB 11054 / UW101) (Cytophaga johnsonae).